We begin with the raw amino-acid sequence, 264 residues long: Type II iodothyronine deiodinase (264 aa).

Residues 1 to 7 (MGLLSVD) lie on the Lumenal side of the membrane. A helical; Signal-anchor for type III membrane protein membrane pass occupies residues 8–28 (LLITLQILPGFFSNCLFLALY). Over 29–264 (DSVVLVKHVL…AESGQTGTEK (236 aa)) the chain is Cytoplasmic. Sec-124 is an active-site residue. Position 124 (Sec-124) is a non-standard amino acid, selenocysteine.

It belongs to the iodothyronine deiodinase family. In terms of assembly, predominantly monomer. Can form homodimers but homodimerization is not essential for enzyme activity. High levels seen in the metamorphosing tail.

Its subcellular location is the endoplasmic reticulum membrane. It carries out the reaction 3,3',5-triiodo-L-thyronine + iodide + A + H(+) = L-thyroxine + AH2. The enzyme catalyses 3,3'-diiodo-L-thyronine + iodide + A + H(+) = 3,3',5'-triiodo-L-thyronine + AH2. The catalysed reaction is 3'-iodo-L-thyronine + iodide + A + H(+) = 3',5'-diiodo-L-thyronine + AH2. It catalyses the reaction 3,3'-diiodothyronamine + iodide + A + H(+) = 3,3',5'-triiodothyronamine + AH2. It carries out the reaction 3'-iodothyronamine + iodide + A + H(+) = 3',5'-diiodothyronamine + AH2. Its activity is regulated as follows. Not inhibited by N(6)-propylthiouracil. In terms of biological role, plays a crucial role in the metabolism of thyroid hormones (TH) and has specific roles in TH activation and inactivation by deiodination. Catalyzes the deiodination of L-thyroxine (T4) to 3,5,3'-triiodothyronine (T3) and 3',5'-diiodothyronine (3',5'-T2) to 3'-monoiodothyronine (3'-T1) via outer-ring deiodination (ORD). Catalyzes the deiodination of 3,3',5'-triiodothyronine (rT3) to 3,3'-diiodothyronine (3,3'-T2) via ORD. Catalyzes the phenolic ring deiodinations of 3,3',5'-triiodothyronamine and 3',5'- diiodothyronamine. The sequence is that of Type II iodothyronine deiodinase (dio2) from Aquarana catesbeiana (American bullfrog).